A 561-amino-acid polypeptide reads, in one-letter code: DNA ligase (561 aa).

E247 lines the ATP pocket. K249 acts as the N6-AMP-lysine intermediate in catalysis. Residues R254, R269, E299, F339, R414, and K420 each contribute to the ATP site.

It belongs to the ATP-dependent DNA ligase family. Monomer. Mg(2+) is required as a cofactor.

It catalyses the reaction ATP + (deoxyribonucleotide)n-3'-hydroxyl + 5'-phospho-(deoxyribonucleotide)m = (deoxyribonucleotide)n+m + AMP + diphosphate.. DNA ligase that seals nicks in double-stranded DNA during DNA replication, DNA recombination and DNA repair. This is DNA ligase from Pyrococcus furiosus (strain ATCC 43587 / DSM 3638 / JCM 8422 / Vc1).